The chain runs to 210 residues: Transcriptional regulator DauR (210 aa).

The protein belongs to the DauR family.

In terms of biological role, dauR represses the dauBAR operon. The polypeptide is Transcriptional regulator DauR (Pseudomonas aeruginosa (strain ATCC 15692 / DSM 22644 / CIP 104116 / JCM 14847 / LMG 12228 / 1C / PRS 101 / PAO1)).